The chain runs to 31 residues: GCIATGSFCTLSKGCCTKNCGWNFHCNPPNQ.

Intrachain disulfides connect Cys2-Cys16, Cys9-Cys20, and Cys15-Cys26. 2 positions are modified to 4-hydroxyproline: Pro28 and Pro29.

It belongs to the nemertide family. In terms of tissue distribution, confined to the epidermis and to the mucus layer.

The protein resides in the secreted. Its function is as follows. Highly potent toxin against both insect and some mammalian sodium channels (Nav). It potently inhibits inactivation of insect sodium channels of B.germanica (BgNav1) (EC(50)=7.8 nM) and also delays the inactivation of mammalian Nav with potent activity on Nav1.3/SCN3A and Nav1.4/SCN4A (hNav1.1/SCN1A; EC(50)=102.1 nM, rNav1.2/SCN2A; EC(50)=156.1 nM, rNav1.3/SCN3A; EC(50)=9.4 nM, rNav1.4/SCN4A; EC(50)=15.4 nM, hNav1.5/SCN5A; EC(50)=132.7 nM, mNav1.6/SCN8A; EC(50)=66.9 nM, hNav1.9/SCN9A; EC(50)=73 nM). 1 uM is enough to completely inhibits the inactivation, resulting in sustained non-inactivating currents. In addition, the toxin significantly enhances the recovery from inactivation, and the open state is not required for the toxin to interact with the channel. In vivo, injection into brine shrimp (Artemia salina) stops movement or causes death after 24 hours (EC(50)=0.4 uM). The protein is Nemertide alpha-5 of Ramphogordius pseudolacteus (Ribbon worm).